The following is a 120-amino-acid chain: Urease subunit beta (120 aa).

This sequence belongs to the urease beta subunit family. In terms of assembly, heterotrimer of UreA (gamma), UreB (beta) and UreC (alpha) subunits. Three heterotrimers associate to form the active enzyme.

Its subcellular location is the cytoplasm. It catalyses the reaction urea + 2 H2O + H(+) = hydrogencarbonate + 2 NH4(+). It functions in the pathway nitrogen metabolism; urea degradation; CO(2) and NH(3) from urea (urease route): step 1/1. The chain is Urease subunit beta from Corynebacterium efficiens (strain DSM 44549 / YS-314 / AJ 12310 / JCM 11189 / NBRC 100395).